A 561-amino-acid chain; its full sequence is Small ribosomal subunit protein bS1 (561 aa).

S1 motif domains lie at 22 to 88 (GEVI…LSRE), 106 to 172 (GDIL…VSRR), 193 to 261 (GSVI…LGMK), 278 to 348 (GTRL…LGMK), 365 to 435 (GDKI…LGIK), and 452 to 521 (GSLV…LSVK).

Belongs to the bacterial ribosomal protein bS1 family.

Functionally, binds mRNA; thus facilitating recognition of the initiation point. It is needed to translate mRNA with a short Shine-Dalgarno (SD) purine-rich sequence. This chain is Small ribosomal subunit protein bS1 (rpsA), found in Neisseria meningitidis serogroup B (strain ATCC BAA-335 / MC58).